The sequence spans 317 residues: Malate dehydrogenase (317 aa).

Residues Gly-10 to Gly-15 and Asp-34 contribute to the NAD(+) site. Residues Arg-83 and Arg-89 each contribute to the substrate site. Residues Asn-96 and Ile-119–Asn-121 contribute to the NAD(+) site. Substrate is bound by residues Asn-121 and Arg-152. The active-site Proton acceptor is His-176.

Belongs to the LDH/MDH superfamily. MDH type 3 family.

It carries out the reaction (S)-malate + NAD(+) = oxaloacetate + NADH + H(+). Its function is as follows. Catalyzes the reversible oxidation of malate to oxaloacetate. In Citrifermentans bemidjiense (strain ATCC BAA-1014 / DSM 16622 / JCM 12645 / Bem) (Geobacter bemidjiensis), this protein is Malate dehydrogenase.